We begin with the raw amino-acid sequence, 179 residues long: Large ribosomal subunit protein uL5 (179 aa).

The protein belongs to the universal ribosomal protein uL5 family. As to quaternary structure, part of the 50S ribosomal subunit; part of the 5S rRNA/L5/L18/L25 subcomplex. Contacts the 5S rRNA and the P site tRNA. Forms a bridge to the 30S subunit in the 70S ribosome.

Its function is as follows. This is one of the proteins that bind and probably mediate the attachment of the 5S RNA into the large ribosomal subunit, where it forms part of the central protuberance. In the 70S ribosome it contacts protein S13 of the 30S subunit (bridge B1b), connecting the 2 subunits; this bridge is implicated in subunit movement. Contacts the P site tRNA; the 5S rRNA and some of its associated proteins might help stabilize positioning of ribosome-bound tRNAs. The protein is Large ribosomal subunit protein uL5 of Thermoanaerobacter sp. (strain X514).